A 137-amino-acid polypeptide reads, in one-letter code: Probable disulfide formation protein C (137 aa).

A helical transmembrane segment spans residues 6–25; that stretch reads ENLMLGSWLTALTAMLGSLY. An intrachain disulfide couples Cys35 to Cys38. 2 helical membrane-spanning segments follow: residues 40 to 59 and 66 to 83; these read YQRIIMYPLVLILFIGYLKR and YSLWFSLIGMFTSLYHYS. A disulfide bridge connects residues Cys97 and Cys102. Residues 111-133 traverse the membrane as a helical segment; sequence GFVTIPFLAFTAFVIIFICSLLI.

The protein belongs to the DsbB family. BdbC subfamily.

It localises to the cell membrane. Required for disulfide bond formation in some proteins. This Halalkalibacterium halodurans (strain ATCC BAA-125 / DSM 18197 / FERM 7344 / JCM 9153 / C-125) (Bacillus halodurans) protein is Probable disulfide formation protein C.